Here is a 329-residue protein sequence, read N- to C-terminus: GTP 3',8-cyclase (329 aa).

Residues 8–234 (AFARKFYYLR…QLRQRSDGPA (227 aa)) form the Radical SAM core domain. Arg-17 serves as a coordination point for GTP. [4Fe-4S] cluster contacts are provided by Cys-24 and Cys-28. Tyr-30 contacts S-adenosyl-L-methionine. [4Fe-4S] cluster is bound at residue Cys-31. Arg-68 contributes to the GTP binding site. An S-adenosyl-L-methionine-binding site is contributed by Gly-72. Thr-99 contacts GTP. Ser-123 is an S-adenosyl-L-methionine binding site. Lys-160 contacts GTP. Met-194 contributes to the S-adenosyl-L-methionine binding site. [4Fe-4S] cluster contacts are provided by Cys-257 and Cys-260. 262 to 264 (RLR) is a GTP binding site. Cys-274 contacts [4Fe-4S] cluster.

The protein belongs to the radical SAM superfamily. MoaA family. As to quaternary structure, monomer and homodimer. [4Fe-4S] cluster serves as cofactor.

The enzyme catalyses GTP + AH2 + S-adenosyl-L-methionine = (8S)-3',8-cyclo-7,8-dihydroguanosine 5'-triphosphate + 5'-deoxyadenosine + L-methionine + A + H(+). It participates in cofactor biosynthesis; molybdopterin biosynthesis. Functionally, catalyzes the cyclization of GTP to (8S)-3',8-cyclo-7,8-dihydroguanosine 5'-triphosphate. In Shigella sonnei (strain Ss046), this protein is GTP 3',8-cyclase.